A 494-amino-acid chain; its full sequence is Glutamyl-tRNA(Gln) amidotransferase subunit A (494 aa).

Active-site charge relay system residues include Lys-79 and Ser-154. The active-site Acyl-ester intermediate is Ser-178.

This sequence belongs to the amidase family. GatA subfamily. In terms of assembly, heterotrimer of A, B and C subunits.

It catalyses the reaction L-glutamyl-tRNA(Gln) + L-glutamine + ATP + H2O = L-glutaminyl-tRNA(Gln) + L-glutamate + ADP + phosphate + H(+). Its function is as follows. Allows the formation of correctly charged Gln-tRNA(Gln) through the transamidation of misacylated Glu-tRNA(Gln) in organisms which lack glutaminyl-tRNA synthetase. The reaction takes place in the presence of glutamine and ATP through an activated gamma-phospho-Glu-tRNA(Gln). This Clostridium kluyveri (strain NBRC 12016) protein is Glutamyl-tRNA(Gln) amidotransferase subunit A.